Reading from the N-terminus, the 343-residue chain is Acetylglutamate kinase (343 aa).

Residues 98-99, Arg120, and Asn219 each bind substrate; that span reads GG.

The protein belongs to the acetylglutamate kinase family. ArgB subfamily.

Its subcellular location is the cytoplasm. It catalyses the reaction N-acetyl-L-glutamate + ATP = N-acetyl-L-glutamyl 5-phosphate + ADP. It functions in the pathway amino-acid biosynthesis; L-arginine biosynthesis; N(2)-acetyl-L-ornithine from L-glutamate: step 2/4. Functionally, catalyzes the ATP-dependent phosphorylation of N-acetyl-L-glutamate. The polypeptide is Acetylglutamate kinase (Frankia alni (strain DSM 45986 / CECT 9034 / ACN14a)).